The following is a 347-amino-acid chain: MKTLTPCAFTLGELAERLKARLVGDSDRRVTGLATLLDAGPNDITFLANKTYLKYLPDTRAAAVLVHPAHGTDAPCARLELENPYLGYAELSRLFDPLAGQAPEGVHPSAVVAESARIGEHVSVGPQCVIEAGAVIGDGCVIGAGSIVGADSEIGADSRLHANVTVYHGVSVGRRAILHSGCVIGADGFGFAHDGQGWHKIAQLGGVIVGDDVEIGSCSSIDRGALGDTVIGNDVKIDSQVQIAHNVQIGDHSALAGCVGIAGSTRVGSHCMLGGGVGLSGHLTLCDGVQVTGMSLVTNSIHEPGVYSSGTGAMPNGLWRKNAVRFKQLDELAKRLSRLERGASDTP.

His-245 serves as the catalytic Proton acceptor.

Belongs to the transferase hexapeptide repeat family. LpxD subfamily. In terms of assembly, homotrimer.

It catalyses the reaction a UDP-3-O-[(3R)-3-hydroxyacyl]-alpha-D-glucosamine + a (3R)-hydroxyacyl-[ACP] = a UDP-2-N,3-O-bis[(3R)-3-hydroxyacyl]-alpha-D-glucosamine + holo-[ACP] + H(+). It functions in the pathway bacterial outer membrane biogenesis; LPS lipid A biosynthesis. Functionally, catalyzes the N-acylation of UDP-3-O-acylglucosamine using 3-hydroxyacyl-ACP as the acyl donor. Is involved in the biosynthesis of lipid A, a phosphorylated glycolipid that anchors the lipopolysaccharide to the outer membrane of the cell. In Chromohalobacter salexigens (strain ATCC BAA-138 / DSM 3043 / CIP 106854 / NCIMB 13768 / 1H11), this protein is UDP-3-O-acylglucosamine N-acyltransferase.